Reading from the N-terminus, the 159-residue chain is MGGTLAIQAQGDLTLAQKKIVRKTWHQLMRNKTSFVTDVFIRIFAYDPSAQNKFPQMAGMSASQLRSSRQMQAHAIRVSSIMSEYVEELDSDILPELLATLARTHDLNKVGADHYNLFAKVLMEALQAELGSDFNEKTRDAWAKAFSVVQAVLLVKHGN.

An N-acetylglycine modification is found at Gly-2. The Globin domain maps to 12-158; that stretch reads DLTLAQKKIV…VQAVLLVKHG (147 aa). Positions 74 and 105 each coordinate heme b.

This sequence belongs to the globin family. As to quaternary structure, monomer.

The chain is Globin C, coelomic from Molpadia arenicola (Sea cucumber).